A 287-amino-acid polypeptide reads, in one-letter code: Cyclopropane mycolic acid synthase MmaA2 (287 aa).

Residues 33–34, 72–74, 94–99, 123–124, and Ile136 each bind S-adenosyl-L-methionine; these read YS, GCG, TLSKNQ, and WE. Cys269 is a catalytic residue.

This sequence belongs to the CFA/CMAS family.

It carries out the reaction a 1-acyl-2-(9Z)-enoyl-sn-glycero-3-phospholipid + S-adenosyl-L-methionine = a 1-acyl-2-(9-cyclopronane)-acyl-sn-glycero-3-phospholipid + S-adenosyl-L-homocysteine + H(+). The protein operates within lipid metabolism; mycolic acid biosynthesis. Catalyzes the conversion of a double bond to a cis cyclopropane ring at the distal position of an alpha mycolic acid via the transfer of a methylene group from S-adenosyl-L-methionine. MmaA2 also catalyzes the biosynthesis of the cis-cyclopropanated methoxymycolates. Cyclopropanated mycolic acids are key factors participating in cell envelope permeability, host immunomodulation and persistence. This chain is Cyclopropane mycolic acid synthase MmaA2 (cmaC), found in Mycobacterium bovis (strain ATCC BAA-935 / AF2122/97).